Here is a 910-residue protein sequence, read N- to C-terminus: Importin subunit beta-2 (910 aa).

HEAT repeat units follow at residues 12-39 (VLVE…NLLE), 44-82 (IPDL…VSSL), 93-126 (YTKS…RWGI), 132-169 (VLPQ…LDRD), 177-207 (DFMI…QFVL), 220-247 (FLET…VYLL), 259-286 (GSIV…FWLA), 302-406 (DKIV…LSSF), 414-442 (IILP…GAIA), 454-481 (PELY…TLGR), 499-532 (FVPL…EEQA), 540-573 (LEPI…ADYV), 581-619 (RYIE…VALR), 627-677 (AETY…ALGS), 690-721 (LGQI…MYCF), 729-764 (DALL…LQLG), 772-807 (KPLL…VYNP), 815-848 (ELFY…LACN), and 857-888 (PMFV…VELF). Residues 34 to 122 (ALNLLEKAKD…SGNVITTIIS (89 aa)) form the Importin N-terminal domain. The disordered stretch occupies residues 333–381 (DREEDIRPQHAKGKSRITLNTQGPITQQGSSNADADELEDEDEDDDEFD). Over residues 349–364 (ITLNTQGPITQQGSSN) the composition is skewed to polar residues. Over residues 366-381 (DADELEDEDEDDDEFD) the composition is skewed to acidic residues.

Belongs to the importin beta family. Importin beta-2 subfamily. As to quaternary structure, interacts with Ran; interacts specifically with the GTP-bound form of Ran (GTP-Ran), protecting it from GTP hydrolysis and nucleotide exchange. Interacts with nucleoporins.

The protein resides in the cytoplasm. It localises to the nucleus envelope. In terms of biological role, functions in nuclear protein import as nuclear transport receptor. Serves as receptor for arginine/glycine-rich nuclear localization signals (rg-NLS) and PY-NLS in cargo substrates. Its predominant cargo substrate seems to be mRNA-binding proteins. Mediates docking of the importin/substrate complex to the nuclear pore complex (NPC) through binding to repeat-containing nucleoporins. The complex is subsequently translocated through the pore by an energy requiring, Ran-dependent mechanism. At the nucleoplasmic side of the NPC, GTP-Ran binding leads to release of the cargo. The importin is re-exported from the nucleus to the cytoplasm where GTP hydrolysis releases Ran from importin. The directionality of nuclear import is thought to be conferred by an asymmetric distribution of the GTP- and GDP-bound forms of Ran between the cytoplasm and nucleus. This Schizosaccharomyces pombe (strain 972 / ATCC 24843) (Fission yeast) protein is Importin subunit beta-2.